The following is a 152-amino-acid chain: ESAT-6 secretion machinery protein EssA (152 aa).

The Cytoplasmic portion of the chain corresponds to 1–114 (MLMNSVIALT…PYIQNKQEKK (114 aa)). Residues 115–135 (IFPYILMSVGAFLTLGFVIFS) form a helical membrane-spanning segment. At 136-152 (IHKGRRTKNESARKSNI) the chain is on the extracellular side.

This sequence belongs to the EssA family.

It localises to the cell membrane. Functionally, component of the ESAT-6 secretion system (Ess). Required for the secretion of EsxA. The polypeptide is ESAT-6 secretion machinery protein EssA (Staphylococcus aureus (strain MRSA252)).